The following is a 113-amino-acid chain: Nucleoid-associated protein Athe_1143 (113 aa).

The protein belongs to the YbaB/EbfC family. Homodimer.

It is found in the cytoplasm. The protein localises to the nucleoid. Binds to DNA and alters its conformation. May be involved in regulation of gene expression, nucleoid organization and DNA protection. The chain is Nucleoid-associated protein Athe_1143 from Caldicellulosiruptor bescii (strain ATCC BAA-1888 / DSM 6725 / KCTC 15123 / Z-1320) (Anaerocellum thermophilum).